Reading from the N-terminus, the 87-residue chain is Toxin ICK-41 (87 aa).

The signal sequence occupies residues 1-19 (MKPIVYMLLFCAFTVVILG). Disulfide bonds link Cys-40–Cys-54, Cys-40–Cys-77, Cys-53–Cys-66, and Cys-80–Cys-87.

It belongs to the neurotoxin 27 (Jztx-72) family. ICK-41 subfamily. As to expression, expressed by the venom gland.

Its subcellular location is the secreted. Probable neurotoxin with ion channel impairing activity. In Trittame loki (Brush-footed trapdoor spider), this protein is Toxin ICK-41.